The chain runs to 964 residues: Glycine dehydrogenase (decarboxylating) (964 aa).

The span at 1–10 shows a compositional bias: polar residues; the sequence is MNSTLQNRNR. The disordered stretch occupies residues 1-25; that stretch reads MNSTLQNRNRTNLERVSTDPLDTFP. Lysine 713 carries the N6-(pyridoxal phosphate)lysine modification.

It belongs to the GcvP family. The glycine cleavage system is composed of four proteins: P, T, L and H. Pyridoxal 5'-phosphate is required as a cofactor.

The enzyme catalyses N(6)-[(R)-lipoyl]-L-lysyl-[glycine-cleavage complex H protein] + glycine + H(+) = N(6)-[(R)-S(8)-aminomethyldihydrolipoyl]-L-lysyl-[glycine-cleavage complex H protein] + CO2. Functionally, the glycine cleavage system catalyzes the degradation of glycine. The P protein binds the alpha-amino group of glycine through its pyridoxal phosphate cofactor; CO(2) is released and the remaining methylamine moiety is then transferred to the lipoamide cofactor of the H protein. The protein is Glycine dehydrogenase (decarboxylating) of Leptospira borgpetersenii serovar Hardjo-bovis (strain JB197).